The chain runs to 468 residues: 3-isopropylmalate dehydratase large subunit (468 aa).

3 residues coordinate [4Fe-4S] cluster: Cys-347, Cys-407, and Cys-410.

The protein belongs to the aconitase/IPM isomerase family. LeuC type 1 subfamily. As to quaternary structure, heterodimer of LeuC and LeuD. The cofactor is [4Fe-4S] cluster.

The enzyme catalyses (2R,3S)-3-isopropylmalate = (2S)-2-isopropylmalate. It participates in amino-acid biosynthesis; L-leucine biosynthesis; L-leucine from 3-methyl-2-oxobutanoate: step 2/4. Functionally, catalyzes the isomerization between 2-isopropylmalate and 3-isopropylmalate, via the formation of 2-isopropylmaleate. The chain is 3-isopropylmalate dehydratase large subunit from Campylobacter jejuni subsp. jejuni serotype O:6 (strain 81116 / NCTC 11828).